We begin with the raw amino-acid sequence, 258 residues long: Countin-1 (258 aa).

A signal peptide spans 1–21; sequence MNKLFSLILALFLVNSAVVSS. The 85-residue stretch at 22 to 106 folds into the Saposin B-type domain; that stretch reads LDSCSICVDF…EKISVCKTND (85 aa). 3 disulfide bridges follow: C25/C102, C28/C96, and C56/C69. Residues N121 and N215 are each glycosylated (N-linked (GlcNAc...) asparagine). Residues 233 to 248 show a composition bias toward low complexity; it reads AGSFSGSSQSTQTGAA. The tract at residues 233–258 is disordered; that stretch reads AGSFSGSSQSTQTGAASGSGSGFALF. A compositionally biased stretch (gly residues) spans 249–258; sequence SGSGSGFALF.

This sequence belongs to the countin family. In terms of assembly, component of the counting factor (CF) complex, which includes cf60, cf50, cf45-1 and ctnA.

The protein resides in the secreted. In terms of biological role, cell-counting factor that limits the maximum size of the multicellular structure. May down-regulate the expression of gp24, which mediates cell adhesion. This is Countin-1 (ctnA) from Dictyostelium discoideum (Social amoeba).